The sequence spans 105 residues: Met repressor (105 aa).

It belongs to the MetJ family. As to quaternary structure, homodimer.

The protein resides in the cytoplasm. Its function is as follows. This regulatory protein, when combined with SAM (S-adenosylmethionine) represses the expression of the methionine regulon and of enzymes involved in SAM synthesis. In Erwinia tasmaniensis (strain DSM 17950 / CFBP 7177 / CIP 109463 / NCPPB 4357 / Et1/99), this protein is Met repressor.